A 93-amino-acid polypeptide reads, in one-letter code: UPF0337 protein Bd3330 (93 aa).

It belongs to the UPF0337 (CsbD) family.

The chain is UPF0337 protein Bd3330 from Bdellovibrio bacteriovorus (strain ATCC 15356 / DSM 50701 / NCIMB 9529 / HD100).